The sequence spans 409 residues: Adenosine deaminase (409 aa).

Zn(2+)-binding residues include His65, His67, His207, and Asp314.

The protein belongs to the metallo-dependent hydrolases superfamily. It depends on Zn(2+) as a cofactor.

The catalysed reaction is adenosine + H2O + H(+) = inosine + NH4(+). Its function is as follows. Catalyzes the deamination of adenosine into inosine. Is also able to deaminate adenine, but with considerably less efficiency. Is not active toward 6-chloroadenine. The sequence is that of Adenosine deaminase from Helicobacter pylori (strain ATCC 700392 / 26695) (Campylobacter pylori).